The primary structure comprises 1024 residues: Beta-galactosidase (1024 aa).

Residues asparagine 103 and aspartate 202 each contribute to the substrate site. A Na(+)-binding site is contributed by aspartate 202. Positions 417, 419, and 462 each coordinate Mg(2+). Residues glutamate 462 and glutamate 538–histidine 541 contribute to the substrate site. Glutamate 462 serves as the catalytic Proton donor. The Nucleophile role is filled by glutamate 538. Asparagine 598 lines the Mg(2+) pocket. 2 residues coordinate Na(+): phenylalanine 602 and asparagine 605. Asparagine 605 and tryptophan 1000 together coordinate substrate.

This sequence belongs to the glycosyl hydrolase 2 family. As to quaternary structure, homotetramer. The cofactor is Mg(2+). Na(+) is required as a cofactor.

It carries out the reaction Hydrolysis of terminal non-reducing beta-D-galactose residues in beta-D-galactosides.. The sequence is that of Beta-galactosidase from Escherichia coli O6:H1 (strain CFT073 / ATCC 700928 / UPEC).